Reading from the N-terminus, the 62-residue chain is Conotoxin TsMLCL-02 (62 aa).

The signal sequence occupies residues 1 to 19 (MLCLPVFIILLLLASPAAP). The propeptide occupies 20 to 54 (NPLERRIQSDLIRAALEDADMKTEKGILSSIMGTL).

It belongs to the conotoxin T superfamily. Expressed by the venom duct.

The protein localises to the secreted. The sequence is that of Conotoxin TsMLCL-02 from Conus tessulatus (Tessellate cone).